The primary structure comprises 241 residues: 15,16-dihydrobiliverdin:ferredoxin oxidoreductase (241 aa).

The protein belongs to the HY2 family.

It catalyses the reaction 15,16-dihydrobiliverdin + oxidized 2[4Fe-4S]-[ferredoxin] = biliverdin IXalpha + reduced 2[4Fe-4S]-[ferredoxin] + 2 H(+). Its function is as follows. Catalyzes the two-electron reduction of biliverdin IX-alpha at the C15 methine bridge. In Prochlorococcus marinus (strain SARG / CCMP1375 / SS120), this protein is 15,16-dihydrobiliverdin:ferredoxin oxidoreductase (pebA).